A 470-amino-acid polypeptide reads, in one-letter code: Ribulose bisphosphate carboxylase large chain (470 aa).

Substrate is bound by residues Asn-115 and Thr-165. The Proton acceptor role is filled by Lys-167. Lys-169 is a substrate binding site. Mg(2+) contacts are provided by Lys-193, Asp-195, and Glu-196. Lys-193 carries the post-translational modification N6-carboxylysine. His-286 (proton acceptor) is an active-site residue. Positions 287, 319, and 371 each coordinate substrate.

This sequence belongs to the RuBisCO large chain family. Type I subfamily. As to quaternary structure, heterohexadecamer of 8 large chains and 8 small chains. Forms a CsoS2-CsoS1-RuBisCO complex. Mg(2+) serves as cofactor.

Its subcellular location is the carboxysome. It carries out the reaction 2 (2R)-3-phosphoglycerate + 2 H(+) = D-ribulose 1,5-bisphosphate + CO2 + H2O. The enzyme catalyses D-ribulose 1,5-bisphosphate + O2 = 2-phosphoglycolate + (2R)-3-phosphoglycerate + 2 H(+). Its function is as follows. RuBisCO catalyzes two reactions: the carboxylation of D-ribulose 1,5-bisphosphate, the primary event in carbon dioxide fixation, as well as the oxidative fragmentation of the pentose substrate in the photorespiration process. Both reactions occur simultaneously and in competition at the same active site. This chain is Ribulose bisphosphate carboxylase large chain, found in Prochlorococcus marinus (strain MIT 9313).